The following is a 379-amino-acid chain: Copper-containing nitrite reductase (379 aa).

Positions 1–32 form a signal peptide, tat-type signal; it reads MSEQFRLTRRSMLAGAAVAGALAPVVTSVAHA. 2 Plastocyanin-like domains span residues 33–214 and 215–379; these read EGGG…YDKV and YYVG…PTSG. The Cu cation site is built by H134, H139, H174, C175, H184, M189, and H345.

Belongs to the multicopper oxidase family. As to quaternary structure, homotrimer. It depends on Cu(2+) as a cofactor. Cu(+) serves as cofactor. The cofactor is FAD. Predicted to be exported by the Tat system. The position of the signal peptide cleavage has not been experimentally proven.

It is found in the periplasm. It catalyses the reaction nitric oxide + Fe(III)-[cytochrome c] + H2O = Fe(II)-[cytochrome c] + nitrite + 2 H(+). Its pathway is nitrogen metabolism; nitrate reduction (denitrification); dinitrogen from nitrate: step 2/4. This is Copper-containing nitrite reductase (nirU) from Neorhizobium galegae (Rhizobium galegae).